Here is a 390-residue protein sequence, read N- to C-terminus: UDP-galactose translocator (390 aa).

A disordered region spans residues 1–24 (MAAVGVGGSTAAAGAGAVSSGALE). 10 helical membrane-spanning segments follow: residues 3–23 (AVGV…SGAL), 37–57 (YISL…IRYA), 65–85 (FFAT…CLLL), 97–117 (LVLF…KLAV), 140–160 (TFQV…VLML), 169–189 (WASL…QAGG), 200–220 (GAGL…GVYF), 238–258 (LGLF…GTAV), 269–289 (PAVW…AVVV), and 315–335 (LFGF…IGAV). Residues 9–22 (STAAAGAGAVSSGA) show a composition bias toward low complexity. The segment at 356 to 390 (PCIHQQPPGQPPPPQLSSRGDLTTEPFLPKSVLVK) is disordered.

It belongs to the nucleotide-sugar transporter family. SLC35A subfamily. Interacts with SLC35A3; the interaction is reduced in the presence of SLC35A4. Found in a complex with SLC35A3 and SLC35A4.

The protein resides in the golgi apparatus membrane. It carries out the reaction UMP(out) + UDP-alpha-D-galactose(in) = UMP(in) + UDP-alpha-D-galactose(out). The catalysed reaction is UDP-N-acetyl-alpha-D-galactosamine(in) + UMP(out) = UDP-N-acetyl-alpha-D-galactosamine(out) + UMP(in). It catalyses the reaction UMP(out) + UDP-alpha-D-glucose(in) = UMP(in) + UDP-alpha-D-glucose(out). The enzyme catalyses UMP(out) + UDP-N-acetyl-alpha-D-glucosamine(in) = UMP(in) + UDP-N-acetyl-alpha-D-glucosamine(out). It carries out the reaction UDP-alpha-D-galactose(in) + AMP(out) = UDP-alpha-D-galactose(out) + AMP(in). The catalysed reaction is UDP-alpha-D-galactose(in) + CMP(out) = UDP-alpha-D-galactose(out) + CMP(in). It catalyses the reaction UDP-N-acetyl-alpha-D-galactosamine(out) + UDP-alpha-D-galactose(in) = UDP-N-acetyl-alpha-D-galactosamine(in) + UDP-alpha-D-galactose(out). The enzyme catalyses UDP-N-acetyl-alpha-D-glucosamine(out) + UDP-alpha-D-galactose(in) = UDP-N-acetyl-alpha-D-glucosamine(in) + UDP-alpha-D-galactose(out). It carries out the reaction UDP-alpha-D-galactose(in) + UDP-alpha-D-glucose(out) = UDP-alpha-D-galactose(out) + UDP-alpha-D-glucose(in). The catalysed reaction is UMP(out) + CMP(in) = UMP(in) + CMP(out). It catalyses the reaction UMP(out) + AMP(in) = UMP(in) + AMP(out). Its function is as follows. Transports uridine diphosphate galactose (UDP-galactose) from the cytosol into the Golgi apparatus. It functions as an antiporter that exchanges UDP-galactose for UMP. It is also able to exchange UDP-galactose for AMP and CMP, and to transport UDP-N-acetylgalactosamine (UDP-GalNAc) and other nucleotide sugars. As a provider of UDP-galactose to galactosyltransferases present in the Golgi apparatus, it is necessary for globotriaosylceramide/globoside (Gb3Cer) synthesis from lactosylceramide. The chain is UDP-galactose translocator from Mus musculus (Mouse).